The following is a 728-amino-acid chain: MSMFNKVVKQFQWGQHTVRMETGEIARQAGGAVIVDVEDTVVLATVVAAKSPKPGQDFFPLTVDYIEKTYAAGKIPGGFFKREGRPSENETLTSRLIDRPLRPLFPEGFYNDVQVVVHVVSLNPEIPADIPALIGASAALAVSGIPFNGPVGAARIGYKDGQYLLNPTRSQMATSDLDLVVAGTERAVLMVESEANQLSEDVMLGAVVYGHEQMQIAINAIHDLVREGGKPEWDWAPAPKNEALIAKVTEVALPLLQEAYQLRQKSARSQKLKEVSANVTAALAEAGVDADKVEVGNIMFDLEAKIVRGQILGGEPRIDGRDTRTVRPIEIRSSVLPRAHGSALFTRGETQALVVATLGTKSDEQIIDALAGEYRDRFMLHYNMPPFATGETGRVGSPKRREIGHGRLAKRALIPVLPKDDEFAYTIRLVSEITESNGSSSMASVCGGCLALMDAGVPVKAHVAGVAMGLILEGNKFAVLTDILGDEDHLGDMDFKVAGTDNGITALQMDIKVQGITKEIMQVALAQAKEGRLHILGAMQGAMGHARTELSAHAPRMITMKIHPDKIREVIGKGGSTIQALTKETGTTIDIQEDGTITIASTSTDGMAEAKRRIEGITAEAEVGKIYNGTVLKLLDFGAIVNILPGKDGLLHISEIVNERVKDIKDWLKEGQQLRVKLIQADEKGRLRLSLKAALAEEGGSISPVNAGEAAPAPAPAAAPATPSDQQQ.

Mg(2+) contacts are provided by D488 and D494. The 60-residue stretch at 555-614 (PRMITMKIHPDKIREVIGKGGSTIQALTKETGTTIDIQEDGTITIASTSTDGMAEAKRRI) folds into the KH domain. An S1 motif domain is found at 624 to 692 (GKIYNGTVLK…EKGRLRLSLK (69 aa)). Residues 702-728 (ISPVNAGEAAPAPAPAAAPATPSDQQQ) are disordered. A compositionally biased stretch (low complexity) spans 710–721 (AAPAPAPAAAPA).

It belongs to the polyribonucleotide nucleotidyltransferase family. Mg(2+) serves as cofactor.

The protein resides in the cytoplasm. The enzyme catalyses RNA(n+1) + phosphate = RNA(n) + a ribonucleoside 5'-diphosphate. In terms of biological role, involved in mRNA degradation. Catalyzes the phosphorolysis of single-stranded polyribonucleotides processively in the 3'- to 5'-direction. The protein is Polyribonucleotide nucleotidyltransferase of Cupriavidus pinatubonensis (strain JMP 134 / LMG 1197) (Cupriavidus necator (strain JMP 134)).